The chain runs to 286 residues: MNAYQKTIGRAVTLSGVGVHGGAPASARLLPADADTGILFQRSDIKDSAPVCAHVSQIGATDLCTSLGAREARIDTVEHLMAAISALGIDNLVVEIEGPEVPILDGTSARFIEAVDSVGVVTQDAKRRFIRILKTVRVEAGNSWGEFRPYDGTRFEVEIDFECPLIGRQKFAHDVDEETFRKELSTARTFGFMKDVERLWAAGLALGASLDNSLVIGDDNSIVNADGLRFKDEFVRHKTLDAVGDLALAGLPFIGCFSSYRGGHRLNSEAVKALLSDETAFEIIEA.

Zn(2+) contacts are provided by His79, His237, and Asp241. Catalysis depends on His264, which acts as the Proton donor.

The protein belongs to the LpxC family. Requires Zn(2+) as cofactor.

The enzyme catalyses a UDP-3-O-[(3R)-3-hydroxyacyl]-N-acetyl-alpha-D-glucosamine + H2O = a UDP-3-O-[(3R)-3-hydroxyacyl]-alpha-D-glucosamine + acetate. It functions in the pathway glycolipid biosynthesis; lipid IV(A) biosynthesis; lipid IV(A) from (3R)-3-hydroxytetradecanoyl-[acyl-carrier-protein] and UDP-N-acetyl-alpha-D-glucosamine: step 2/6. Catalyzes the hydrolysis of UDP-3-O-myristoyl-N-acetylglucosamine to form UDP-3-O-myristoylglucosamine and acetate, the committed step in lipid A biosynthesis. The protein is UDP-3-O-acyl-N-acetylglucosamine deacetylase of Brucella abortus (strain 2308).